Here is a 503-residue protein sequence, read N- to C-terminus: MEKIPRWLLFSLISSVLCILGALCVPLLSVAFDSKRNSQSKLVNYGLSLSAGSMITTSLYMLLPRIEKSNRFKVFPGLLLGICLSFFLNYLVHAFASESLVHCADSGDHATGSHIHSKSHSHSHSHSHADSHSNFSNDHDLENAPSEHGYATSSSSVSENDPLITKDSDRPQMKKKMSLIDLLTRRKSEGECCDLNKCTPLLQSEQPEYIACVPPVIKSSQSERNVPHGCEGSEDNGQSDDKDHRGLVCVENNIGYDLENLSLYRKNFLSSRHHHSSESPENYGSNQLSHSFSSPLGNDVTENPAALADTQYHPENGSLYPHHHHLETPFSKLLSIGMQTCLVLALHKFPEGFIIFYTNRSDSSKSLGFSIFLSLTIHNFVEGFAMTLPFYTVFESKWVAILITAVLGGGSQPLGALIGYFIFKGSTPRDHEPNMDFLLSVTAGFLLVIGLQMFQTGIGFSDGHHHHQGEGDEEMKQSHSSGTTCLKWCCTGVLLILASALFT.

Transmembrane regions (helical) follow at residues 8 to 28 (LLFS…VPLL), 42 to 62 (LVNY…LYML), and 75 to 95 (FPGL…VHAF). Residues 112 to 171 (GSHIHSKSHSHSHSHSHADSHSNFSNDHDLENAPSEHGYATSSSSVSENDPLITKDSDRP) form a disordered region. Positions 115–126 (IHSKSHSHSHSH) are enriched in basic residues. The segment covering 127-142 (SHADSHSNFSNDHDLE) has biased composition (basic and acidic residues). 2 positions are modified to phosphoserine: Ser-178 and Ser-188. 2 disordered regions span residues 221–244 (QSER…DKDH) and 274–295 (HHSS…FSSP). A compositionally biased stretch (polar residues) spans 280 to 295 (PENYGSNQLSHSFSSP). A run of 5 helical transmembrane segments spans residues 336–356 (IGMQ…FIIF), 371–391 (IFLS…LPFY), 398–418 (WVAI…GALI), 438–458 (LLSV…QTGI), and 482–502 (GTTC…SALF).

The protein belongs to the ZIP transporter (TC 2.A.5) family.

The protein resides in the vacuole membrane. Its function is as follows. Transports zinc from storage in the vacuole to the cytoplasm. This is Zinc-regulated transporter 3 (ZRT3) from Saccharomyces cerevisiae (strain ATCC 204508 / S288c) (Baker's yeast).